A 147-amino-acid chain; its full sequence is D-aminoacyl-tRNA deacylase (147 aa).

A Gly-cisPro motif, important for rejection of L-amino acids motif is present at residues 136-137; sequence GP.

Belongs to the DTD family. As to quaternary structure, homodimer.

The protein resides in the cytoplasm. The enzyme catalyses glycyl-tRNA(Ala) + H2O = tRNA(Ala) + glycine + H(+). It catalyses the reaction a D-aminoacyl-tRNA + H2O = a tRNA + a D-alpha-amino acid + H(+). In terms of biological role, an aminoacyl-tRNA editing enzyme that deacylates mischarged D-aminoacyl-tRNAs. Also deacylates mischarged glycyl-tRNA(Ala), protecting cells against glycine mischarging by AlaRS. Acts via tRNA-based rather than protein-based catalysis; rejects L-amino acids rather than detecting D-amino acids in the active site. By recycling D-aminoacyl-tRNA to D-amino acids and free tRNA molecules, this enzyme counteracts the toxicity associated with the formation of D-aminoacyl-tRNA entities in vivo and helps enforce protein L-homochirality. The chain is D-aminoacyl-tRNA deacylase from Streptococcus pneumoniae (strain P1031).